The sequence spans 852 residues: DNA polymerase kappa (852 aa).

The 256-residue stretch at 102 to 357 (IVHVDMDAFY…LPIRKVSGIG (256 aa)) folds into the UmuC domain. Positions 106 and 197 each coordinate Mg(2+). Residues 252 to 273 (FEDSPPDLQPQGSPFQLNSEEQ) are disordered. Polar residues predominate over residues 261–273 (PQGSPFQLNSEEQ). 2 consecutive UBZ4-type zinc fingers follow at residues 619 to 649 (TFICPVCFREQEGVSLEAFNEHVDECLDGPS) and 761 to 791 (ALVCPVCNLEQETSDLTLFNIHVDICLNKGI). Cysteine 622, cysteine 625, histidine 640, cysteine 644, cysteine 764, cysteine 767, histidine 782, and cysteine 786 together coordinate Zn(2+). The disordered stretch occupies residues 798-852 (SEGNSVKQPKESSRSTDRLQKASGRTKRPGTKTKSSTLKKTKPRDPRHTLDGFFK). Residues 805–817 (QPKESSRSTDRLQ) show a composition bias toward basic and acidic residues. Over residues 821-839 (GRTKRPGTKTKSSTLKKTK) the composition is skewed to basic residues. Positions 840 to 852 (PRDPRHTLDGFFK) are enriched in basic and acidic residues.

It belongs to the DNA polymerase type-Y family. As to quaternary structure, interacts with PCNA. Interacts with REV1. Mg(2+) is required as a cofactor. Mn(2+) serves as cofactor. In terms of tissue distribution, detected at low levels in heart, brain, lung, liver, kidney and testis.

The protein resides in the nucleus. It catalyses the reaction DNA(n) + a 2'-deoxyribonucleoside 5'-triphosphate = DNA(n+1) + diphosphate. DNA polymerase specifically involved in DNA repair. Plays an important role in translesion synthesis, where the normal high-fidelity DNA polymerases cannot proceed and DNA synthesis stalls. Depending on the context, it inserts the correct base, but causes frequent base transitions, transversions and frameshifts. Lacks 3'-5' proofreading exonuclease activity. Forms a Schiff base with 5'-deoxyribose phosphate at abasic sites, but does not have lyase activity. In Mus musculus (Mouse), this protein is DNA polymerase kappa (Polk).